The chain runs to 337 residues: Ketol-acid reductoisomerase (NADP(+)) (337 aa).

The region spanning 1–180 (MFYEKDADVD…GGGKSGIIET (180 aa)) is the KARI N-terminal Rossmann domain. NADP(+) contacts are provided by residues 22-25 (YGSQ), arginine 46, serine 49, serine 51, and 81-84 (DELQ). Histidine 106 is a catalytic residue. Glycine 132 contacts NADP(+). One can recognise a KARI C-terminal knotted domain in the interval 181–326 (TFKDECETDL…AELRAMMPWI (146 aa)). Mg(2+) is bound by residues aspartate 189, glutamate 193, glutamate 225, and glutamate 229. Serine 250 is a substrate binding site.

It belongs to the ketol-acid reductoisomerase family. Mg(2+) serves as cofactor.

It catalyses the reaction (2R)-2,3-dihydroxy-3-methylbutanoate + NADP(+) = (2S)-2-acetolactate + NADPH + H(+). The enzyme catalyses (2R,3R)-2,3-dihydroxy-3-methylpentanoate + NADP(+) = (S)-2-ethyl-2-hydroxy-3-oxobutanoate + NADPH + H(+). It functions in the pathway amino-acid biosynthesis; L-isoleucine biosynthesis; L-isoleucine from 2-oxobutanoate: step 2/4. Its pathway is amino-acid biosynthesis; L-valine biosynthesis; L-valine from pyruvate: step 2/4. In terms of biological role, involved in the biosynthesis of branched-chain amino acids (BCAA). Catalyzes an alkyl-migration followed by a ketol-acid reduction of (S)-2-acetolactate (S2AL) to yield (R)-2,3-dihydroxy-isovalerate. In the isomerase reaction, S2AL is rearranged via a Mg-dependent methyl migration to produce 3-hydroxy-3-methyl-2-ketobutyrate (HMKB). In the reductase reaction, this 2-ketoacid undergoes a metal-dependent reduction by NADPH to yield (R)-2,3-dihydroxy-isovalerate. The sequence is that of Ketol-acid reductoisomerase (NADP(+)) from Pelagibacter ubique (strain HTCC1062).